Here is a 151-residue protein sequence, read N- to C-terminus: D-aminoacyl-tRNA deacylase (151 aa).

The Gly-cisPro motif, important for rejection of L-amino acids motif lies at 137–138 (GP).

This sequence belongs to the DTD family. In terms of assembly, homodimer.

The protein resides in the cytoplasm. It catalyses the reaction glycyl-tRNA(Ala) + H2O = tRNA(Ala) + glycine + H(+). The enzyme catalyses a D-aminoacyl-tRNA + H2O = a tRNA + a D-alpha-amino acid + H(+). An aminoacyl-tRNA editing enzyme that deacylates mischarged D-aminoacyl-tRNAs. Also deacylates mischarged glycyl-tRNA(Ala), protecting cells against glycine mischarging by AlaRS. Acts via tRNA-based rather than protein-based catalysis; rejects L-amino acids rather than detecting D-amino acids in the active site. By recycling D-aminoacyl-tRNA to D-amino acids and free tRNA molecules, this enzyme counteracts the toxicity associated with the formation of D-aminoacyl-tRNA entities in vivo and helps enforce protein L-homochirality. The protein is D-aminoacyl-tRNA deacylase of Protochlamydia amoebophila (strain UWE25).